The sequence spans 81 residues: MSFNPELATKTLEAEGLRCPEPVMMVRKTIRTMQDGEVLLVKADDPSTTRDIPSFCRFMDHQLIAAQTDELPYQYLIKKGL.

The Cysteine persulfide intermediate role is filled by cysteine 19.

It belongs to the sulfur carrier protein TusA family.

It is found in the cytoplasm. Sulfur carrier protein which probably makes part of a sulfur-relay system. This is Sulfur carrier protein TusA from Vibrio vulnificus (strain CMCP6).